The chain runs to 563 residues: Ataxin-10 homolog (563 aa).

Threonine 433 is subject to Phosphothreonine. Positions 544–563 are disordered; that stretch reads VSKEEDPGNENSEIISIDED. Residue serine 559 is modified to Phosphoserine.

Belongs to the ataxin-10 family.

It localises to the cytoplasm. Its function is as follows. May play a role in the regulation of cytokinesis. This chain is Ataxin-10 homolog (CTR86), found in Saccharomyces cerevisiae (strain ATCC 204508 / S288c) (Baker's yeast).